Consider the following 226-residue polypeptide: MVKSFFITGTDTDVGKTLVARTLLLEFVAHGIQCAGYKPISAGCARTPDGLRNLDAVLLQEAANLSLPYDMVNPYAFEPPIAPHIAASEARDAITLKGLSDGLRQIEQAGAELVVVEGAGGWFLPLDRKHLLSDWVKQENIPVIMVVGAKLGCLNHALLTFAAIRNDNLPVAGWVMNRLYGSMSHYQENLDTLRGLLPAPFLGEIPFVNNPLEADLRGRLDISPLL.

13–18 (DVGKTL) serves as a coordination point for ATP. Residue T17 coordinates Mg(2+). Residue K38 is part of the active site. Residues D55, 117 to 120 (EGAG), 177 to 178 (NR), 206 to 208 (PFV), and E213 contribute to the ATP site. Mg(2+) is bound by residues D55 and E117.

It belongs to the dethiobiotin synthetase family. As to quaternary structure, homodimer. Mg(2+) is required as a cofactor.

It localises to the cytoplasm. The catalysed reaction is (7R,8S)-7,8-diammoniononanoate + CO2 + ATP = (4R,5S)-dethiobiotin + ADP + phosphate + 3 H(+). The protein operates within cofactor biosynthesis; biotin biosynthesis; biotin from 7,8-diaminononanoate: step 1/2. In terms of biological role, catalyzes a mechanistically unusual reaction, the ATP-dependent insertion of CO2 between the N7 and N8 nitrogen atoms of 7,8-diaminopelargonic acid (DAPA, also called 7,8-diammoniononanoate) to form a ureido ring. This is ATP-dependent dethiobiotin synthetase BioD from Aeromonas salmonicida (strain A449).